A 507-amino-acid polypeptide reads, in one-letter code: Maturase K (507 aa).

The protein belongs to the intron maturase 2 family. MatK subfamily.

The protein resides in the plastid. It localises to the chloroplast. Functionally, usually encoded in the trnK tRNA gene intron. Probably assists in splicing its own and other chloroplast group II introns. The protein is Maturase K of Calocedrus decurrens (California incense-cedar).